The sequence spans 94 residues: Large ribosomal subunit protein bL25 (94 aa).

This sequence belongs to the bacterial ribosomal protein bL25 family. In terms of assembly, part of the 50S ribosomal subunit; part of the 5S rRNA/L5/L18/L25 subcomplex. Contacts the 5S rRNA. Binds to the 5S rRNA independently of L5 and L18.

In terms of biological role, this is one of the proteins that binds to the 5S RNA in the ribosome where it forms part of the central protuberance. In Pectobacterium atrosepticum (strain SCRI 1043 / ATCC BAA-672) (Erwinia carotovora subsp. atroseptica), this protein is Large ribosomal subunit protein bL25.